The sequence spans 331 residues: Type 2 lactosamine alpha-2,3-sialyltransferase (331 aa).

Residues 1–4 (MRGY) lie on the Cytoplasmic side of the membrane. The helical; Signal-anchor for type II membrane protein transmembrane segment at 5-25 (LVAIFLSAVFLYYVLHCILWG) threads the bilayer. Residues 26–331 (TNVYWVAPVE…KNLVINLTQD (306 aa)) are Lumenal-facing. 6 N-linked (GlcNAc...) asparagine glycosylation sites follow: asparagine 129, asparagine 181, asparagine 282, asparagine 295, asparagine 308, and asparagine 327.

Belongs to the glycosyltransferase 29 family. In terms of tissue distribution, ubiquitous.

Its subcellular location is the golgi apparatus membrane. It carries out the reaction a neolactoside nLc4Cer(d18:1(4E)) + CMP-N-acetyl-beta-neuraminate = a neolactoside IV(3)-alpha-NeuAc-nLc4Cer(d18:1(4E)) + CMP + H(+). The catalysed reaction is a beta-D-galactosyl-(1-&gt;4)-N-acetyl-beta-D-glucosaminyl derivative + CMP-N-acetyl-beta-neuraminate = an N-acetyl-alpha-neuraminyl-(2-&gt;3)-beta-D-galactosyl-(1-&gt;4)-N-acetyl-beta-D-glucosaminyl derivative + CMP + H(+). It catalyses the reaction a neolactoside nLc6Cer(d18:1(4E)) + CMP-N-acetyl-beta-neuraminate = a neolactoside VI(3)-alpha-NeuNAc-nLc6Cer(d18:1(4E)) + CMP + H(+). Its function is as follows. Transfers the sialyl residue from CMP-N-acetyl-beta-neuraminate to the terminal galactose residue on sugar chains of glycoproteins and glycolipids. It's alpha-2,3-sialyltransferase activity is specific toward type II glycan chains (Galbeta1-4GlcNAc) on glycoproteins and glycolipids such as neolactosides nLc4Cer and nLc6Cer, whose sialyl-products serve as precursors for the Lewis X antigen. Critically involved in the synthesis of functional selectin ligands needed for neutrophil recruitment during inflammation and lymphocyte homing to the lymph nodes. The chain is Type 2 lactosamine alpha-2,3-sialyltransferase (ST3GAL6) from Homo sapiens (Human).